The sequence spans 307 residues: Carbamate kinase (307 aa).

It belongs to the carbamate kinase family.

It localises to the cytoplasm. It carries out the reaction hydrogencarbonate + NH4(+) + ATP = carbamoyl phosphate + ADP + H2O + H(+). The protein operates within metabolic intermediate metabolism; carbamoyl phosphate degradation; CO(2) and NH(3) from carbamoyl phosphate: step 1/1. In terms of biological role, carbamate kinase involved in the arginine deiminase pathway of fermentative arginine utilization. The chain is Carbamate kinase (arcC) from Halobacterium salinarum (strain ATCC 700922 / JCM 11081 / NRC-1) (Halobacterium halobium).